A 490-amino-acid polypeptide reads, in one-letter code: Cobyric acid synthase (490 aa).

Positions 252-439 constitute a GATase cobBQ-type domain; sequence RLKVVVPVLP…LHGLFESTAA (188 aa). Cys-333 serves as the catalytic Nucleophile. Residue His-431 is part of the active site.

The protein belongs to the CobB/CobQ family. CobQ subfamily.

It participates in cofactor biosynthesis; adenosylcobalamin biosynthesis. Its function is as follows. Catalyzes amidations at positions B, D, E, and G on adenosylcobyrinic A,C-diamide. NH(2) groups are provided by glutamine, and one molecule of ATP is hydrogenolyzed for each amidation. This Pseudomonas aeruginosa (strain UCBPP-PA14) protein is Cobyric acid synthase.